Consider the following 290-residue polypeptide: Acetylglutamate kinase (290 aa).

Residues 65–66 (GG), Arg87, and Asn186 each bind substrate.

The protein belongs to the acetylglutamate kinase family. ArgB subfamily.

The protein localises to the cytoplasm. It catalyses the reaction N-acetyl-L-glutamate + ATP = N-acetyl-L-glutamyl 5-phosphate + ADP. Its pathway is amino-acid biosynthesis; L-arginine biosynthesis; N(2)-acetyl-L-ornithine from L-glutamate: step 2/4. Catalyzes the ATP-dependent phosphorylation of N-acetyl-L-glutamate. This Mycobacterium sp. (strain JLS) protein is Acetylglutamate kinase.